A 107-amino-acid chain; its full sequence is Phosphoribosyl-ATP pyrophosphatase (107 aa).

The protein belongs to the PRA-PH family.

It localises to the cytoplasm. It carries out the reaction 1-(5-phospho-beta-D-ribosyl)-ATP + H2O = 1-(5-phospho-beta-D-ribosyl)-5'-AMP + diphosphate + H(+). It functions in the pathway amino-acid biosynthesis; L-histidine biosynthesis; L-histidine from 5-phospho-alpha-D-ribose 1-diphosphate: step 2/9. The chain is Phosphoribosyl-ATP pyrophosphatase from Neisseria gonorrhoeae (strain ATCC 700825 / FA 1090).